The sequence spans 347 residues: Photosystem II protein D1 (347 aa).

3 consecutive transmembrane segments (helical) span residues 32–49 (YIGW…LATV), 121–136 (HFIL…EWEF), and 145–159 (WIFV…AASA). A chlorophyll a-binding site is contributed by His-121. Pheophytin a is bound at residue Tyr-129. [CaMn4O5] cluster contacts are provided by Asp-173 and Glu-192. A helical membrane pass occupies residues 200–221 (FHILGVAAVFGGSLFSAMHGSL). Residue His-201 coordinates chlorophyll a. A quinone contacts are provided by residues His-218 and 267–268 (SF). Fe cation is bound at residue His-218. Residue His-275 participates in Fe cation binding. Residues 277 to 291 (FLAAWPVIGIWFTAL) form a helical membrane-spanning segment. Positions 335, 336, 345, and 347 each coordinate [CaMn4O5] cluster.

The protein belongs to the reaction center PufL/M/PsbA/D family. As to quaternary structure, PSII is composed of 1 copy each of membrane proteins PsbA, PsbB, PsbC, PsbD, PsbE, PsbF, PsbH, PsbI, PsbJ, PsbK, PsbL, PsbM, PsbT, PsbX, PsbY, PsbZ, Psb30/Ycf12, at least 3 peripheral proteins of the oxygen-evolving complex and a large number of cofactors. It forms dimeric complexes. The cofactor is The D1/D2 heterodimer binds P680, chlorophylls that are the primary electron donor of PSII, and subsequent electron acceptors. It shares a non-heme iron and each subunit binds pheophytin, quinone, additional chlorophylls, carotenoids and lipids. D1 provides most of the ligands for the Mn4-Ca-O5 cluster of the oxygen-evolving complex (OEC). There is also a Cl(-1) ion associated with D1 and D2, which is required for oxygen evolution. The PSII complex binds additional chlorophylls, carotenoids and specific lipids.. Tyr-164 forms a radical intermediate that is referred to as redox-active TyrZ, YZ or Y-Z.

The protein resides in the plastid. It is found in the chloroplast thylakoid membrane. It carries out the reaction 2 a plastoquinone + 4 hnu + 2 H2O = 2 a plastoquinol + O2. Photosystem II (PSII) is a light-driven water:plastoquinone oxidoreductase that uses light energy to abstract electrons from H(2)O, generating O(2) and a proton gradient subsequently used for ATP formation. It consists of a core antenna complex that captures photons, and an electron transfer chain that converts photonic excitation into a charge separation. The D1/D2 (PsbA/PsbD) reaction center heterodimer binds P680, the primary electron donor of PSII as well as several subsequent electron acceptors. In Heterocapsa niei (Dinoflagellate), this protein is Photosystem II protein D1.